Consider the following 213-residue polypeptide: Adenylate kinase (213 aa).

10 to 15 lines the ATP pocket; the sequence is GSGKGT. The segment at 30 to 59 is NMP; the sequence is STGDMLRTTVNKESVLGKNIQAIIKLGNLV. AMP contacts are provided by residues Thr-31, Arg-36, 57–59, 85–88, and Gln-92; these read NLV and GFPR. The LID stretch occupies residues 122-159; that stretch reads GRMVHEPSGRIYHVTFNPPKQKGKDDITGENLIIRQDD. ATP contacts are provided by residues Arg-123 and 132-133; that span reads IY. Arg-156 and Arg-167 together coordinate AMP. Cys-199 is an ATP binding site.

The protein belongs to the adenylate kinase family. As to quaternary structure, monomer.

The protein resides in the cytoplasm. The catalysed reaction is AMP + ATP = 2 ADP. It participates in purine metabolism; AMP biosynthesis via salvage pathway; AMP from ADP: step 1/1. Catalyzes the reversible transfer of the terminal phosphate group between ATP and AMP. Plays an important role in cellular energy homeostasis and in adenine nucleotide metabolism. The sequence is that of Adenylate kinase from Baumannia cicadellinicola subsp. Homalodisca coagulata.